A 276-amino-acid polypeptide reads, in one-letter code: Rho-related protein racO (276 aa).

11–18 is a GTP binding site; that stretch reads GDGLIGKT. An Effector region motif is present at residues 34 to 42; that stretch reads YSSFDSEYL. GTP contacts are provided by residues 60 to 64 and 124 to 127; these read ENDGF and IKTD. A disordered region spans residues 199–276; sequence FKNNNNNNNY…NKTTNKCKIS (78 aa). Over residues 200–270 the composition is skewed to low complexity; it reads KNNNNNNNYN…SYKNHNNKTT (71 aa). Cys273 is subject to Cysteine methyl ester. A lipid anchor (S-geranylgeranyl cysteine) is attached at Cys273. A propeptide spans 274–276 (removed in mature form); the sequence is KIS.

It belongs to the small GTPase superfamily. Rho family.

Its subcellular location is the cell membrane. In Dictyostelium discoideum (Social amoeba), this protein is Rho-related protein racO (racO).